Reading from the N-terminus, the 275-residue chain is Mitochondrial outer membrane porin (275 aa).

The protein belongs to the eukaryotic mitochondrial porin (TC 1.B.8.1) family.

Its subcellular location is the mitochondrion outer membrane. Functionally, forms a channel through the cell membrane that allows diffusion of small hydrophilic molecules. The channel adopts an open conformation at low or zero membrane potential and a closed conformation at potentials above 30-40 mV. The open state has a weak anion selectivity whereas the closed state is cation-selective. In Triticum aestivum (Wheat), this protein is Mitochondrial outer membrane porin (VDAC1).